The following is a 311-amino-acid chain: Homoserine kinase (311 aa).

89–99 contacts ATP; that stretch reads PFARGLGSSAT.

Belongs to the GHMP kinase family. Homoserine kinase subfamily.

The protein localises to the cytoplasm. The catalysed reaction is L-homoserine + ATP = O-phospho-L-homoserine + ADP + H(+). It functions in the pathway amino-acid biosynthesis; L-threonine biosynthesis; L-threonine from L-aspartate: step 4/5. In terms of biological role, catalyzes the ATP-dependent phosphorylation of L-homoserine to L-homoserine phosphate. The polypeptide is Homoserine kinase (Halothermothrix orenii (strain H 168 / OCM 544 / DSM 9562)).